Reading from the N-terminus, the 82-residue chain is Small ribosomal subunit protein bS16 (82 aa).

The protein belongs to the bacterial ribosomal protein bS16 family.

This chain is Small ribosomal subunit protein bS16, found in Synechocystis sp. (strain ATCC 27184 / PCC 6803 / Kazusa).